The chain runs to 322 residues: ATP-dependent 6-phosphofructokinase (322 aa).

Glycine 11 serves as a coordination point for ATP. 21-25 (RAVVR) provides a ligand contact to ADP. Residues 72–73 (RC) and 102–105 (GDGS) contribute to the ATP site. A Mg(2+)-binding site is contributed by aspartate 103. Residue 127–129 (TID) participates in substrate binding. The active-site Proton acceptor is aspartate 129. Arginine 156 is an ADP binding site. Substrate contacts are provided by residues arginine 164 and 171–173 (MGR). Residues 187 to 189 (GAE), arginine 213, and 215 to 217 (KKH) each bind ADP. Residues glutamate 224, arginine 245, and 251–254 (HVQR) contribute to the substrate site.

Belongs to the phosphofructokinase type A (PFKA) family. ATP-dependent PFK group I subfamily. Prokaryotic clade 'B1' sub-subfamily. In terms of assembly, homotetramer. Mg(2+) is required as a cofactor.

It localises to the cytoplasm. The catalysed reaction is beta-D-fructose 6-phosphate + ATP = beta-D-fructose 1,6-bisphosphate + ADP + H(+). It functions in the pathway carbohydrate degradation; glycolysis; D-glyceraldehyde 3-phosphate and glycerone phosphate from D-glucose: step 3/4. Its activity is regulated as follows. Allosterically activated by ADP and other diphosphonucleosides, and allosterically inhibited by phosphoenolpyruvate. Functionally, catalyzes the phosphorylation of D-fructose 6-phosphate to fructose 1,6-bisphosphate by ATP, the first committing step of glycolysis. This Staphylococcus aureus (strain JH1) protein is ATP-dependent 6-phosphofructokinase.